The primary structure comprises 1783 residues: uncharacterized protein (1783 aa).

A helical membrane pass occupies residues 16-36 (FFLLFGIIFVLFSIIFLETSI). The segment covering 105 to 119 (GSDSGQSNGSGDNQN) has biased composition (low complexity). The disordered stretch occupies residues 105 to 125 (GSDSGQSNGSGDNQNKTIPRK). Transmembrane regions (helical) follow at residues 917 to 937 (VSTV…ILLI), 967 to 987 (VFAG…AFLL), 1010 to 1030 (WLSF…ISWI), 1084 to 1104 (LFTY…AGTI), 1660 to 1680 (FLLG…GISM), 1709 to 1729 (FIPA…GVLI), 1730 to 1750 (GIQA…FEFL), and 1752 to 1772 (YMVG…YFWI).

It belongs to the ABC-4 integral membrane protein family.

Its subcellular location is the cell membrane. This is an uncharacterized protein from Mycoplasma genitalium (strain ATCC 33530 / DSM 19775 / NCTC 10195 / G37) (Mycoplasmoides genitalium).